A 399-amino-acid polypeptide reads, in one-letter code: MVKEKVILAYSGGLDTSVAITWLNKDYDVIAVCMDVGEGNDLDFIHDKALKVGAIESHVIDVKDEFAEDYVLVALQGHTFYEQKYPLVSALSRPLISKKLVEIAHKTGATTIAHGCTGKGNDQVRFEVAIASLDPSLKVIAPVREWKWSREEEINYAKANGVPIPADLDSPYSVDQNLWGRANECGVLENPWNEAPEDAYDLTVAPEAAPDSPVYVNIDFEAGVPVALDGKKMKLADLILELNDLAGQHGVGRIDHVENRLVGIKSREIYECPGAVTLLAAHKEIEDLTLVRELAHFKPIIENELSNLIYNGLWFNPATEALIAYLKSTQQVVNGTAKVKLYKGSATVVARKSDNSLYDESLATYTSADTFDQDAAIGFIKLWGLPSKVHAEVQAHKDK.

9-17 lines the ATP pocket; the sequence is AYSGGLDTS. Tyrosine 85 contributes to the L-citrulline binding site. Glycine 115 is an ATP binding site. Residues threonine 117, asparagine 121, and aspartate 122 each coordinate L-aspartate. Asparagine 121 contacts L-citrulline. The L-citrulline site is built by arginine 125, serine 173, glutamate 258, and tyrosine 270.

The protein belongs to the argininosuccinate synthase family. Type 1 subfamily. Homotetramer.

The protein resides in the cytoplasm. It catalyses the reaction L-citrulline + L-aspartate + ATP = 2-(N(omega)-L-arginino)succinate + AMP + diphosphate + H(+). It functions in the pathway amino-acid biosynthesis; L-arginine biosynthesis; L-arginine from L-ornithine and carbamoyl phosphate: step 2/3. This chain is Argininosuccinate synthase, found in Streptococcus gordonii (strain Challis / ATCC 35105 / BCRC 15272 / CH1 / DL1 / V288).